The chain runs to 118 residues: Phospholipase A2 'basic' (118 aa).

7 cysteine pairs are disulfide-bonded: cysteine 11/cysteine 70, cysteine 26/cysteine 117, cysteine 28/cysteine 44, cysteine 43/cysteine 98, cysteine 50/cysteine 91, cysteine 59/cysteine 84, and cysteine 77/cysteine 89. Positions 27, 29, and 31 each coordinate Ca(2+). Histidine 47 is a catalytic residue. Aspartate 48 contributes to the Ca(2+) binding site. Residues 52–69 (EKAGKMGCWPYLTLYKYK) carry the Coagulation factor Xa binding motif motif. The active site involves aspartate 92.

Belongs to the phospholipase A2 family. Group I subfamily. D49 sub-subfamily. Requires Ca(2+) as cofactor. As to expression, expressed by the venom gland.

It localises to the secreted. It catalyses the reaction a 1,2-diacyl-sn-glycero-3-phosphocholine + H2O = a 1-acyl-sn-glycero-3-phosphocholine + a fatty acid + H(+). In terms of biological role, snake venom phospholipase A2 (PLA2) that shows strong anticoagulant activity. Binds directly with the coagulation factor FXa (F10) and blocks the formation of the prothombinase complex. Acts by a nonenzymatic mechanism. Also inhibits the complex composed of tissue factor (F3) and coagulation factor VIIa (F7) (TF-VIIa complex) by both enzymatic and nonenzymatic mechanisms. PLA2 catalyzes the calcium-dependent hydrolysis of the 2-acyl groups in 3-sn-phosphoglycerides. The chain is Phospholipase A2 'basic' from Naja nigricollis (Black-necked spitting cobra).